Consider the following 222-residue polypeptide: uncharacterized protein (222 aa).

The tat-type signal signal peptide spans 1 to 27 (MSFTRRKFVLGMGTVIFFTGSASSLLA). 3 4Fe-4S ferredoxin-type domains span residues 37–66 (YAMI…PAQG), 83–114 (TQYH…RDEQ), and 115–144 (GIVR…LNPV). [4Fe-4S] cluster is bound by residues cysteine 46, cysteine 49, cysteine 52, cysteine 56, cysteine 92, cysteine 95, cysteine 100, cysteine 104, cysteine 124, cysteine 127, cysteine 130, cysteine 134, cysteine 151, cysteine 154, cysteine 167, and cysteine 171.

In terms of processing, predicted to be exported by the Tat system. The position of the signal peptide cleavage has not been experimentally proven.

This is an uncharacterized protein from Escherichia coli O157:H7.